Here is a 684-residue protein sequence, read N- to C-terminus: Protein-glutamine gamma-glutamyltransferase 4 (684 aa).

Active-site residues include cysteine 268, histidine 327, and aspartate 350. Ca(2+) contacts are provided by asparagine 390, aspartate 392, glutamate 442, and glutamate 447.

The protein belongs to the transglutaminase superfamily. Transglutaminase family. As to quaternary structure, homodimer. The cofactor is Ca(2+). In terms of tissue distribution, prostate.

The catalysed reaction is L-glutaminyl-[protein] + L-lysyl-[protein] = [protein]-L-lysyl-N(6)-5-L-glutamyl-[protein] + NH4(+). Associated with the mammalian reproductive process. Catalyzes the cross-linking of proteins and the conjugation of polyamines to specific proteins in the seminal tract. The protein is Protein-glutamine gamma-glutamyltransferase 4 (TGM4) of Homo sapiens (Human).